The following is a 619-amino-acid chain: DNA mismatch repair protein MutL (619 aa).

Residues 358 to 401 (GGNQFARPSEAREAATRFSITSSREPAASGGSSGGASWPHAQPG) form a disordered region.

It belongs to the DNA mismatch repair MutL/HexB family.

Functionally, this protein is involved in the repair of mismatches in DNA. It is required for dam-dependent methyl-directed DNA mismatch repair. May act as a 'molecular matchmaker', a protein that promotes the formation of a stable complex between two or more DNA-binding proteins in an ATP-dependent manner without itself being part of a final effector complex. The polypeptide is DNA mismatch repair protein MutL (Klebsiella pneumoniae (strain 342)).